Consider the following 65-residue polypeptide: Putative antitoxin PF2058 (65 aa).

This sequence belongs to the UPF0165 family.

Functionally, possibly the antitoxin component of a type II toxin-antitoxin (TA) system. The sequence is that of Putative antitoxin PF2058 from Pyrococcus furiosus (strain ATCC 43587 / DSM 3638 / JCM 8422 / Vc1).